We begin with the raw amino-acid sequence, 598 residues long: Vacuolin-A (598 aa).

A coiled-coil region spans residues 482-539; it reads IKTTEARLKAETDNIALEQRNKAIISESQAKLSSAQREAESLLITAEAQKKASELQGE.

Belongs to the vacuolin family.

The protein localises to the endosome membrane. It is found in the lysosome. The polypeptide is Vacuolin-A (vacA) (Dictyostelium discoideum (Social amoeba)).